A 98-amino-acid polypeptide reads, in one-letter code: MTKSELIERIAERQDQLSAKDIELAVKLILEYMSQCLANGDRIEIRGFGSFSLHYRAPRTGRNPKTGESVELEGKFVPHFKPGKEMRDRVNESLEELP.

The protein belongs to the bacterial histone-like protein family. Heterodimer of an alpha and a beta chain.

In terms of biological role, this protein is one of the two subunits of integration host factor, a specific DNA-binding protein that functions in genetic recombination as well as in transcriptional and translational control. The sequence is that of Integration host factor subunit beta from Teredinibacter turnerae (strain ATCC 39867 / T7901).